We begin with the raw amino-acid sequence, 279 residues long: Protein PHOTOPERIODIC CONTROL OF HYPOCOTYL 1-LIKE (279 aa).

Interacts with light-activated phyB. Binds directly to PIF1 and COP1. In terms of processing, ubiquitinated by COP1 in darkness; this leads to proteasomal degradation. As to expression, mainly expressed in cotyledons, hypocotyls, leaves.

Its subcellular location is the nucleus. Functionally, together with PCH1, regulates growth and development adaptation to the ambient environment by controlling negatively phytochrome B (phyB) dark reversion, a temperature-dependent thermal relaxation process during which phyB reverts from the active to the inactive state. Contributes to red (R) light-triggered photomorphogenesis. Promotes various light responses such as seed germination, hypocotyl gravitropism and chlorophyll biosynthesis, via direct interaction with PIF1 and COP1. Prevents DNA-binding ability of PIF1 to negatively regulate the expressions of its target genes. Facilitates the physical interaction between phyB and PIF1 and the subsequent light-induced degradation of PIF1. The sequence is that of Protein PHOTOPERIODIC CONTROL OF HYPOCOTYL 1-LIKE from Arabidopsis thaliana (Mouse-ear cress).